The chain runs to 40 residues: Cell division inhibitor MciZ (40 aa).

In terms of assembly, interacts with FtsZ. Binds to the C-terminal polymerization interface of FtsZ. Binds to FtsZ filaments.

Its activity is regulated as follows. Highly effective in inhibiting polymerization at low and intermediate concentrations of GTP and only partially effective at high GTP concentrations. Functionally, blocks Z-ring formation in the mother cell during sporulation by inhibiting the polymerization of FtsZ. Binds to the minus end of FtsZ and functions as a filament-capping protein. At high concentrations, is capable of both capping and sequestration of FtsZ. Decreases the GTPase activity of FtsZ. This chain is Cell division inhibitor MciZ, found in Bacillus subtilis (strain 168).